We begin with the raw amino-acid sequence, 193 residues long: dCTP deaminase (193 aa).

DCTP is bound by residues 110–115, Asp128, 136–138, Tyr171, Lys178, and Gln182; these read RSSLAR and VLE. Catalysis depends on Glu138, which acts as the Proton donor/acceptor. Residues 169–193 are disordered; sequence RPYNRRQDAKYRDQQGAVASRIDKD.

It belongs to the dCTP deaminase family. Homotrimer.

It catalyses the reaction dCTP + H2O + H(+) = dUTP + NH4(+). It functions in the pathway pyrimidine metabolism; dUMP biosynthesis; dUMP from dCTP (dUTP route): step 1/2. In terms of biological role, catalyzes the deamination of dCTP to dUTP. This chain is dCTP deaminase, found in Citrobacter koseri (strain ATCC BAA-895 / CDC 4225-83 / SGSC4696).